A 208-amino-acid polypeptide reads, in one-letter code: Na(+)-translocating NADH-quinone reductase subunit D (208 aa).

5 consecutive transmembrane segments (helical) span residues 42–62 (IVMGISVALVTGFSSFFISLV), 72–92 (IIVQMAIIASLVTLVDQLLQA), 103–123 (VFVGLIITNCIVMGRAEAFAM), 131–151 (LIDGIGNGAGYGIMLLVVATV), and 178–198 (NGLFLLAPSAFFIIGFLIWGL).

The protein belongs to the NqrDE/RnfAE family. Composed of six subunits; NqrA, NqrB, NqrC, NqrD, NqrE and NqrF.

Its subcellular location is the cell inner membrane. The catalysed reaction is a ubiquinone + n Na(+)(in) + NADH + H(+) = a ubiquinol + n Na(+)(out) + NAD(+). In terms of biological role, NQR complex catalyzes the reduction of ubiquinone-1 to ubiquinol by two successive reactions, coupled with the transport of Na(+) ions from the cytoplasm to the periplasm. NqrA to NqrE are probably involved in the second step, the conversion of ubisemiquinone to ubiquinol. This Neisseria meningitidis serogroup B (strain ATCC BAA-335 / MC58) protein is Na(+)-translocating NADH-quinone reductase subunit D.